The primary structure comprises 353 residues: Nicotinate-nucleotide--dimethylbenzimidazole phosphoribosyltransferase (353 aa).

The active-site Proton acceptor is the glutamate 318.

The protein belongs to the CobT family.

The enzyme catalyses 5,6-dimethylbenzimidazole + nicotinate beta-D-ribonucleotide = alpha-ribazole 5'-phosphate + nicotinate + H(+). It participates in nucleoside biosynthesis; alpha-ribazole biosynthesis; alpha-ribazole from 5,6-dimethylbenzimidazole: step 1/2. In terms of biological role, catalyzes the synthesis of alpha-ribazole-5'-phosphate from nicotinate mononucleotide (NAMN) and 5,6-dimethylbenzimidazole (DMB). This chain is Nicotinate-nucleotide--dimethylbenzimidazole phosphoribosyltransferase, found in Geobacter metallireducens (strain ATCC 53774 / DSM 7210 / GS-15).